A 149-amino-acid polypeptide reads, in one-letter code: Cell division protein SepF (149 aa).

The protein belongs to the SepF family. In terms of assembly, homodimer. Interacts with FtsZ.

The protein resides in the cytoplasm. Functionally, cell division protein that is part of the divisome complex and is recruited early to the Z-ring. Probably stimulates Z-ring formation, perhaps through the cross-linking of FtsZ protofilaments. Its function overlaps with FtsA. This Pelotomaculum thermopropionicum (strain DSM 13744 / JCM 10971 / SI) protein is Cell division protein SepF.